Consider the following 633-residue polypeptide: Probable methyltransferase PMT17 (633 aa).

Topologically, residues 1 to 18 are cytoplasmic; that stretch reads MAKENSGHHHQTEARRKK. The helical; Signal-anchor for type II membrane protein transmembrane segment at 19 to 39 threads the bilayer; the sequence is LTLILGVSGLCILFYVLGAWQ. Topologically, residues 40-633 are lumenal; sequence ANTVPSSISK…NNNNNNNNNN (594 aa). A disordered region spans residues 50–71; that stretch reads LGCETQSNPSSSSSSSSSSESA. Residues 59–70 show a composition bias toward low complexity; that stretch reads SSSSSSSSSSES. Residue asparagine 87 is glycosylated (N-linked (GlcNAc...) asparagine).

The protein belongs to the methyltransferase superfamily.

It localises to the endoplasmic reticulum membrane. This chain is Probable methyltransferase PMT17, found in Arabidopsis thaliana (Mouse-ear cress).